A 143-amino-acid chain; its full sequence is NADH-quinone oxidoreductase subunit A (143 aa).

Helical transmembrane passes span 12–32, 61–81, and 90–110; these read YIVG…FLGG, FYLI…LYIW, and WIGF…LIYA.

This sequence belongs to the complex I subunit 3 family. NDH-1 is composed of 13 different subunits. Subunits NuoA, H, J, K, L, M, N constitute the membrane sector of the complex.

Its subcellular location is the cell inner membrane. It carries out the reaction a quinone + NADH + 5 H(+)(in) = a quinol + NAD(+) + 4 H(+)(out). Its function is as follows. NDH-1 shuttles electrons from NADH, via FMN and iron-sulfur (Fe-S) centers, to quinones in the respiratory chain. The immediate electron acceptor for the enzyme in this species is believed to be ubiquinone. Couples the redox reaction to proton translocation (for every two electrons transferred, four hydrogen ions are translocated across the cytoplasmic membrane), and thus conserves the redox energy in a proton gradient. In Blochmanniella floridana, this protein is NADH-quinone oxidoreductase subunit A.